The chain runs to 492 residues: ATP synthase subunit beta, chloroplastic (492 aa).

Residue 170–177 (GGAGVGKT) participates in ATP binding.

Belongs to the ATPase alpha/beta chains family. F-type ATPases have 2 components, CF(1) - the catalytic core - and CF(0) - the membrane proton channel. CF(1) has five subunits: alpha(3), beta(3), gamma(1), delta(1), epsilon(1). CF(0) has four main subunits: a(1), b(1), b'(1) and c(9-12).

It is found in the plastid. It localises to the chloroplast thylakoid membrane. It carries out the reaction ATP + H2O + 4 H(+)(in) = ADP + phosphate + 5 H(+)(out). Functionally, produces ATP from ADP in the presence of a proton gradient across the membrane. The catalytic sites are hosted primarily by the beta subunits. The sequence is that of ATP synthase subunit beta, chloroplastic from Huperzia lucidula (Shining clubmoss).